A 335-amino-acid polypeptide reads, in one-letter code: Nucleoid-associated protein YejK (335 aa).

This sequence belongs to the YejK family.

It localises to the cytoplasm. The protein localises to the nucleoid. The protein is Nucleoid-associated protein YejK of Salmonella schwarzengrund (strain CVM19633).